The chain runs to 129 residues: MYLHLLKSKIHNAIVTSGDLEYEGSITIDSELLDLAGMIPNEKVLVVNNNNGERFETYIIKGDHGSREIQLNGAAARCALPGDEIIIMTFAVMEEAEARNYKPMVLIVDRHNNPKSRHLVGEQSEPLSN.

Serine 25 serves as the catalytic Schiff-base intermediate with substrate; via pyruvic acid. Pyruvic acid (Ser) is present on serine 25. Residue threonine 57 participates in substrate binding. Tyrosine 58 functions as the Proton donor in the catalytic mechanism. Position 73–75 (73–75) interacts with substrate; that stretch reads GAA.

This sequence belongs to the PanD family. In terms of assembly, heterooctamer of four alpha and four beta subunits. Pyruvate is required as a cofactor. Post-translationally, is synthesized initially as an inactive proenzyme, which is activated by self-cleavage at a specific serine bond to produce a beta-subunit with a hydroxyl group at its C-terminus and an alpha-subunit with a pyruvoyl group at its N-terminus.

It localises to the cytoplasm. The enzyme catalyses L-aspartate + H(+) = beta-alanine + CO2. The protein operates within cofactor biosynthesis; (R)-pantothenate biosynthesis; beta-alanine from L-aspartate: step 1/1. Its function is as follows. Catalyzes the pyruvoyl-dependent decarboxylation of aspartate to produce beta-alanine. This is Aspartate 1-decarboxylase from Chlorobium chlorochromatii (strain CaD3).